Here is a 352-residue protein sequence, read N- to C-terminus: MTIALGKVDEKRGWFDNVDDWLKRDRFVFVGWSGILLFPCAYFALGGWLTGTTFVSSWYTHGLASSYLEGCNFLTSAVSTPSNSMAHSLLLLWGPEAQGDFTRWCQLGGLWTFVALHGAFGLIGFMLRQFEIARAVQIRPYNAIAFSAPIAVFVSVFLIYPLGQSGWFFAPSFGVAGIFRFILFFQGFHNWTLNPFHMMGVAGVLGAALLCAIHGATVENTLFEDGDGSNTFRAFNPTQAEETYSMVTANRFWSQIFGVAFSNKRWLHFFMLFVPVTGLWMSALGVVGLALNLRAYDFVSQEIRAAEDPEFETFYTKNILLNEGIRAWMAAQDQPHENLVFPEEVLPRGNAL.

An N-acetylthreonine modification is found at threonine 2. Phosphothreonine is present on threonine 2. The helical transmembrane segment at 40-60 threads the bilayer; it reads CAYFALGGWLTGTTFVSSWYT. Chlorophyll a is bound at residue histidine 117. The chain crosses the membrane as a helical span at residues 124–140; the sequence is GFMLRQFEIARAVQIRP. The pheophytin a site is built by glutamine 129 and asparagine 142. The chain crosses the membrane as a helical span at residues 152 to 165; that stretch reads VFVSVFLIYPLGQS. Histidine 197 contacts chlorophyll a. A helical membrane pass occupies residues 207-227; the sequence is AALLCAIHGATVENTLFEDGD. Residues histidine 214 and phenylalanine 261 each contribute to the a plastoquinone site. Residue histidine 214 coordinates Fe cation. Histidine 268 lines the Fe cation pocket. Residues 278-294 traverse the membrane as a helical segment; it reads GLWMSALGVVGLALNLR.

The protein belongs to the reaction center PufL/M/PsbA/D family. PSII is composed of 1 copy each of membrane proteins PsbA, PsbB, PsbC, PsbD, PsbE, PsbF, PsbH, PsbI, PsbJ, PsbK, PsbL, PsbM, PsbT, PsbX, PsbY, PsbZ, Psb30/Ycf12, at least 3 peripheral proteins of the oxygen-evolving complex and a large number of cofactors. It forms dimeric complexes. The cofactor is The D1/D2 heterodimer binds P680, chlorophylls that are the primary electron donor of PSII, and subsequent electron acceptors. It shares a non-heme iron and each subunit binds pheophytin, quinone, additional chlorophylls, carotenoids and lipids. There is also a Cl(-1) ion associated with D1 and D2, which is required for oxygen evolution. The PSII complex binds additional chlorophylls, carotenoids and specific lipids..

It localises to the plastid. The protein localises to the chloroplast thylakoid membrane. The enzyme catalyses 2 a plastoquinone + 4 hnu + 2 H2O = 2 a plastoquinol + O2. Photosystem II (PSII) is a light-driven water:plastoquinone oxidoreductase that uses light energy to abstract electrons from H(2)O, generating O(2) and a proton gradient subsequently used for ATP formation. It consists of a core antenna complex that captures photons, and an electron transfer chain that converts photonic excitation into a charge separation. The D1/D2 (PsbA/PsbD) reaction center heterodimer binds P680, the primary electron donor of PSII as well as several subsequent electron acceptors. D2 is needed for assembly of a stable PSII complex. The chain is Photosystem II D2 protein from Ostreococcus tauri.